An 849-amino-acid chain; its full sequence is Thrombospondin type-1 domain-containing protein 1 (849 aa).

Residues 1 to 24 (MKQTLKDFSNLLLVVLCDYVLGEA) form the signal peptide. At 25 to 413 (EHLVLGEPGH…QPQAPVKSNN (389 aa)) the chain is on the extracellular side. Residues Asn39, Asn50, Asn55, Asn66, Asn77, Asn106, and Asn303 are each glycosylated (N-linked (GlcNAc...) asparagine). A TSP type-1 domain is found at 340-393 (IETWGLWQPWSQCSASCGDGVRERRRVCLTSSPSRPGCPGMSSETSPCSLEDCA). Disulfide bonds link Cys352–Cys387, Cys356–Cys392, and Cys367–Cys377. Residues 414-434 (VVTVTGISLCLFIIVATVLIT) form a helical membrane-spanning segment. Residues 435 to 849 (LWRKLGRAPK…STLSVEKLVI (415 aa)) are Cytoplasmic-facing. Phosphoserine is present on Ser463. 3 disordered regions span residues 472–516 (SEPR…SESF), 595–799 (KSPF…KCQS), and 828–849 (GYFGSNEEDETTSTLSVEKLVI). Residues 479–493 (SDAGDGPAGSPGDPG) show a composition bias toward low complexity. Basic residues predominate over residues 636 to 651 (SQVRSHSRGSHFRRTA). Residues 652 to 666 (SFHEARQARPFRERS) are compositionally biased toward basic and acidic residues. Pro residues predominate over residues 720-732 (SPLPKPHSLGPPP).

In terms of assembly, part of a complex composed of THSD1, PTK2/FAK1, TLN1 and VCL. Interacts with TLN1.

It is found in the endosome membrane. The protein localises to the cell junction. The protein resides in the focal adhesion. Its function is as follows. Is a positive regulator of nascent focal adhesion assembly, involved in the modulation of endothelial cell attachment to the extracellular matrix. This is Thrombospondin type-1 domain-containing protein 1 (THSD1) from Bos taurus (Bovine).